A 345-amino-acid chain; its full sequence is Phenylalanine--tRNA ligase alpha subunit (345 aa).

Glutamate 266 is a Mg(2+) binding site.

Belongs to the class-II aminoacyl-tRNA synthetase family. Phe-tRNA synthetase alpha subunit type 1 subfamily. Tetramer of two alpha and two beta subunits. Requires Mg(2+) as cofactor.

Its subcellular location is the cytoplasm. It carries out the reaction tRNA(Phe) + L-phenylalanine + ATP = L-phenylalanyl-tRNA(Phe) + AMP + diphosphate + H(+). This is Phenylalanine--tRNA ligase alpha subunit from Methylibium petroleiphilum (strain ATCC BAA-1232 / LMG 22953 / PM1).